The chain runs to 223 residues: DNA mismatch repair protein MutH (223 aa).

It belongs to the MutH family.

Its subcellular location is the cytoplasm. In terms of biological role, sequence-specific endonuclease that cleaves unmethylated GATC sequences. It is involved in DNA mismatch repair. The sequence is that of DNA mismatch repair protein MutH from Haemophilus influenzae (strain PittGG).